Here is a 172-residue protein sequence, read N- to C-terminus: Diphosphoinositol polyphosphate phosphohydrolase 1 (172 aa).

At Met-1 the chain carries N-acetylmethionine. Substrate is bound by residues Arg-10, 18–20 (KKR), and 39–41 (SSR). A Nudix hydrolase domain is found at 17–142 (YKKRAACLCF…KPVQASYFET (126 aa)). Residues Gly-50 and Glu-66 each contribute to the Mg(2+) site. The Nudix box motif lies at 51–72 (GGMEPEEEPSVAAVREVCEEAG). The Proton acceptor role is filled by Glu-69. A Mg(2+)-binding site is contributed by Glu-70. Substrate-binding positions include 89–91 (RKH), Arg-115, and Lys-133.

Belongs to the Nudix hydrolase family. DIPP subfamily. As to quaternary structure, monomer. The cofactor is Mg(2+). Mn(2+) is required as a cofactor. Requires Zn(2+) as cofactor. Widely expressed. Expressed at higher level in brain, heart, pancreas and liver. Also expressed in placenta, lung and kidney.

It is found in the cytoplasm. It localises to the nucleus. It catalyses the reaction diphospho-myo-inositol polyphosphate + H2O = myo-inositol polyphosphate + phosphate.. The enzyme catalyses 5-diphospho-1D-myo-inositol 1,2,3,4,6-pentakisphosphate + H2O = 1D-myo-inositol hexakisphosphate + phosphate + H(+). The catalysed reaction is 3,5-bis(diphospho)-1D-myo-inositol 1,2,4,6-tetrakisphosphate + H2O = 3-diphospho-1D-myo-inositol 1,2,4,5,6-pentakisphosphate + phosphate + 2 H(+). It carries out the reaction [phosphate](n+1) + n H2O = (n+1) phosphate + n H(+). It catalyses the reaction P(1),P(5)-bis(5'-adenosyl) pentaphosphate + H2O = ADP + ATP + 2 H(+). The enzyme catalyses P(1),P(6)-bis(5'-adenosyl) hexaphosphate + H2O = 2 ATP + 2 H(+). The catalysed reaction is P(1),P(4)-bis(5'-adenosyl) tetraphosphate + H2O = AMP + ATP + 2 H(+). It carries out the reaction a 5'-end (N(7)-methyl 5'-triphosphoguanosine)-ribonucleoside in mRNA + H2O = N(7)-methyl-GMP + a 5'-end diphospho-ribonucleoside in mRNA + 2 H(+). It catalyses the reaction a 5'-end (N(7)-methyl 5'-triphosphoguanosine)-ribonucleoside in mRNA + H2O = N(7)-methyl-GDP + a 5'-end phospho-ribonucleoside in mRNA + 2 H(+). With respect to regulation, endopolyphospahatase activity is inhibited by NaF, NaPPi, beta-glycerol phosphate and heparin. 5-diphosphoinositol pentakisphosphate (5-InsP7) inhibits its mRNA decapping activity. In terms of biological role, cleaves a beta-phosphate from the diphosphate groups in PP-InsP5 (diphosphoinositol pentakisphosphate) and [PP]2-InsP4 (bisdiphosphoinositol tetrakisphosphate), suggesting that it may play a role in signal transduction. InsP6 (inositol hexakisphosphate) is not a substrate. Acts as a negative regulator of the ERK1/2 pathway. Also able to catalyze the hydrolysis of dinucleoside oligophosphates, with diadenosine 5',5'''-P1,P6-hexaphosphate (Ap6A) and diadenosine 5',5'''- P1,P5-pentaphosphate (Ap5A) being the preferred substrates. The major reaction products are ADP and p4a from Ap6A and ADP and ATP from Ap5A. Also able to hydrolyze 5-phosphoribose 1-diphosphate. Acts as a decapping enzyme that modulates the stability of a subset of mRNAs implicated in cell motility. Hydrolyzes monomethylated capped RNA after both the alpha- and beta-phosphates generating m7GMP + ppRNA and m7GDP + pRNA. Can hydrolyze unmethylated capped RNAs. Divalent cations zinc, magnesium and manganese determine its substrate specificity. Exhibits diphosphoinositol polyphosphate phosphohydrolase in the presence of magnesium ions, diadenosine hexaphosphate hydrolase activity in the presence of manganese ions and endopolyphosphatase activity in the presence of zinc ions. Plays an important role in limiting DNA damage and maintaining cell survival upon oxidative stress via its endopolyphosphatase activity. This chain is Diphosphoinositol polyphosphate phosphohydrolase 1, found in Homo sapiens (Human).